The chain runs to 678 residues: DNA ligase (678 aa).

NAD(+) contacts are provided by residues 34 to 38 (DSEYD), 83 to 84 (SL), and glutamate 114. Catalysis depends on lysine 116, which acts as the N6-AMP-lysine intermediate. NAD(+) contacts are provided by arginine 137, glutamate 176, lysine 293, and lysine 317. Zn(2+) is bound by residues cysteine 411, cysteine 414, cysteine 429, and cysteine 435. The region spanning 594-678 (PTRQPLNGES…LMAGYGQTLS (85 aa)) is the BRCT domain.

It belongs to the NAD-dependent DNA ligase family. LigA subfamily. The cofactor is Mg(2+). Mn(2+) is required as a cofactor.

The enzyme catalyses NAD(+) + (deoxyribonucleotide)n-3'-hydroxyl + 5'-phospho-(deoxyribonucleotide)m = (deoxyribonucleotide)n+m + AMP + beta-nicotinamide D-nucleotide.. Its function is as follows. DNA ligase that catalyzes the formation of phosphodiester linkages between 5'-phosphoryl and 3'-hydroxyl groups in double-stranded DNA using NAD as a coenzyme and as the energy source for the reaction. It is essential for DNA replication and repair of damaged DNA. This Acinetobacter baumannii (strain AB307-0294) protein is DNA ligase.